A 333-amino-acid polypeptide reads, in one-letter code: Phenylalanine--tRNA ligase alpha subunit (333 aa).

Mg(2+) is bound at residue Glu-248.

Belongs to the class-II aminoacyl-tRNA synthetase family. Phe-tRNA synthetase alpha subunit type 1 subfamily. In terms of assembly, tetramer of two alpha and two beta subunits. Mg(2+) is required as a cofactor.

It localises to the cytoplasm. The catalysed reaction is tRNA(Phe) + L-phenylalanine + ATP = L-phenylalanyl-tRNA(Phe) + AMP + diphosphate + H(+). The protein is Phenylalanine--tRNA ligase alpha subunit of Ureaplasma parvum serovar 3 (strain ATCC 27815 / 27 / NCTC 11736).